The following is a 207-amino-acid chain: Ribosomal RNA small subunit methyltransferase G (207 aa).

S-adenosyl-L-methionine-binding positions include Gly76, Gln81, 127–128 (VE), and Arg141.

The protein belongs to the methyltransferase superfamily. RNA methyltransferase RsmG family.

The protein localises to the cytoplasm. It catalyses the reaction guanosine(527) in 16S rRNA + S-adenosyl-L-methionine = N(7)-methylguanosine(527) in 16S rRNA + S-adenosyl-L-homocysteine. Its function is as follows. Specifically methylates the N7 position of guanine in position 527 of 16S rRNA. This is Ribosomal RNA small subunit methyltransferase G from Neisseria meningitidis serogroup C / serotype 2a (strain ATCC 700532 / DSM 15464 / FAM18).